The sequence spans 262 residues: Transcription factor Spi-B (262 aa).

Positions 1–31 (MLALEAAQLDGPHFSCLYPDGVFYDLDSCKH) are TAD1 (Acidic). The interval 41–61 (PDSLWDWTVAPPVPATPYEAF) is TAD2. Residues 140-163 (ALEVSDSESDEALVAGPEGKGSEA) are disordered. The segment at residues 169 to 252 (LRLYQFLLGL…VKRKLTYQFD (84 aa)) is a DNA-binding region (ETS).

Belongs to the ETS family. As to quaternary structure, can form homotypic interactions. Interacts with IRF4/Pip. Interacts with JUN. Interacts with TBP. May also interact with CREBBP and EP300. Interacts with NONO/p54(nrb). In terms of tissue distribution, expressed in plasmacytoid dendritic cells (pDCs) and B-cells, not expressed in T-cells or granulocytes. May also be enriched in stem cell populations of the liver.

The protein localises to the nucleus. It localises to the cytoplasm. Functionally, sequence specific transcriptional activator which binds to the PU-box, a purine-rich DNA sequence (5'-GAGGAA-3') that can act as a lymphoid-specific enhancer. Promotes development of plasmacytoid dendritic cells (pDCs), also known as type 2 DC precursors (pre-DC2) or natural interferon (IFN)-producing cells. These cells have the capacity to produce large amounts of interferon and block viral replication. May be required for B-cell receptor (BCR) signaling, which is necessary for normal B-cell development and antigenic stimulation. This chain is Transcription factor Spi-B (SPIB), found in Homo sapiens (Human).